We begin with the raw amino-acid sequence, 530 residues long: Type 2 DNA topoisomerase 6 subunit B (530 aa).

ATP-binding positions include Asn-42, Asp-76, 96–98, 107–113, and Lys-427; these read SSK and MYGLGVK.

The protein belongs to the TOP6B family. As to quaternary structure, homodimer. Heterotetramer of two Top6A and two Top6B chains.

The enzyme catalyses ATP-dependent breakage, passage and rejoining of double-stranded DNA.. With respect to regulation, not inhibited by the DNA gyrase inhibitor novobiocin, instead inhibited by eukaryotic topoisomerase inhibitors such as m- and o-amsacrine, ellipticine, and the quinolone CP-115,953. Radicicol inhibits the ATPase activity. Its function is as follows. Relaxes both positive and negative supercoils and exhibits a strong decatenase and unknotting activity; it cannot introduce DNA supercoils. ATP is absolutely required for DNA cleavage; the nonhydrolyzable analog AMP-PNP generates nicked or linear products from a supercoiled dsDNA substrate. Generates staggered two-nucleotide long 5' overhangs. The enzyme is covalently attached transiently to the 5'-ends of the cleaved strands. The sequence is that of Type 2 DNA topoisomerase 6 subunit B from Saccharolobus shibatae (strain ATCC 51178 / DSM 5389 / JCM 8931 / NBRC 15437 / B12) (Sulfolobus shibatae).